A 416-amino-acid polypeptide reads, in one-letter code: Tryptophan synthase beta chain (416 aa).

Lysine 109 carries the post-translational modification N6-(pyridoxal phosphate)lysine.

It belongs to the TrpB family. As to quaternary structure, tetramer of two alpha and two beta chains. It depends on pyridoxal 5'-phosphate as a cofactor.

It carries out the reaction (1S,2R)-1-C-(indol-3-yl)glycerol 3-phosphate + L-serine = D-glyceraldehyde 3-phosphate + L-tryptophan + H2O. Its pathway is amino-acid biosynthesis; L-tryptophan biosynthesis; L-tryptophan from chorismate: step 5/5. The beta subunit is responsible for the synthesis of L-tryptophan from indole and L-serine. In Prochlorococcus marinus (strain SARG / CCMP1375 / SS120), this protein is Tryptophan synthase beta chain.